The following is a 566-amino-acid chain: Phenylalanine--tRNA ligase beta subunit (566 aa).

In terms of domain architecture, B5 spans 287–362 (YFQEEVEFNV…IGEGLSSFNP (76 aa)). Mg(2+) is bound by residues aspartate 340, aspartate 346, glutamate 349, and aspartate 350.

Belongs to the phenylalanyl-tRNA synthetase beta subunit family. Type 2 subfamily. Tetramer of two alpha and two beta subunits. Mg(2+) is required as a cofactor.

It localises to the cytoplasm. The catalysed reaction is tRNA(Phe) + L-phenylalanine + ATP = L-phenylalanyl-tRNA(Phe) + AMP + diphosphate + H(+). In Borreliella burgdorferi (strain ZS7) (Borrelia burgdorferi), this protein is Phenylalanine--tRNA ligase beta subunit.